A 397-amino-acid chain; its full sequence is Elongation factor Tu-2 (397 aa).

In terms of domain architecture, tr-type G spans 10–206 (KPHVNIGTIG…AVDEFVPEPV (197 aa)). The interval 19 to 26 (GHIDHGKT) is G1. GTP is bound at residue 19–26 (GHIDHGKT). Threonine 26 is a Mg(2+) binding site. The interval 62–66 (GITIS) is G2. The segment at 83–86 (DCPG) is G3. Residues 83–87 (DCPGH) and 138–141 (NKTD) each bind GTP. The G4 stretch occupies residues 138–141 (NKTD). The segment at 176 to 178 (SAL) is G5.

The protein belongs to the TRAFAC class translation factor GTPase superfamily. Classic translation factor GTPase family. EF-Tu/EF-1A subfamily. Monomer.

It is found in the cytoplasm. It carries out the reaction GTP + H2O = GDP + phosphate + H(+). In terms of biological role, GTP hydrolase that promotes the GTP-dependent binding of aminoacyl-tRNA to the A-site of ribosomes during protein biosynthesis. This Streptomyces ramocissimus protein is Elongation factor Tu-2.